The primary structure comprises 121 residues: Large ribosomal subunit protein bL12 (121 aa).

Belongs to the bacterial ribosomal protein bL12 family. As to quaternary structure, homodimer. Part of the ribosomal stalk of the 50S ribosomal subunit. Forms a multimeric L10(L12)X complex, where L10 forms an elongated spine to which 2 to 4 L12 dimers bind in a sequential fashion. Binds GTP-bound translation factors.

In terms of biological role, forms part of the ribosomal stalk which helps the ribosome interact with GTP-bound translation factors. Is thus essential for accurate translation. The chain is Large ribosomal subunit protein bL12 from Escherichia coli O81 (strain ED1a).